The primary structure comprises 363 residues: tRNA/tmRNA (uracil-C(5))-methyltransferase (363 aa).

The S-adenosyl-L-methionine site is built by Q187, Y215, N220, E236, and D296. Residue C321 is the Nucleophile of the active site. Catalysis depends on E355, which acts as the Proton acceptor.

It belongs to the class I-like SAM-binding methyltransferase superfamily. RNA M5U methyltransferase family. TrmA subfamily.

The enzyme catalyses uridine(54) in tRNA + S-adenosyl-L-methionine = 5-methyluridine(54) in tRNA + S-adenosyl-L-homocysteine + H(+). It catalyses the reaction uridine(341) in tmRNA + S-adenosyl-L-methionine = 5-methyluridine(341) in tmRNA + S-adenosyl-L-homocysteine + H(+). Functionally, dual-specificity methyltransferase that catalyzes the formation of 5-methyluridine at position 54 (m5U54) in all tRNAs, and that of position 341 (m5U341) in tmRNA (transfer-mRNA). The protein is tRNA/tmRNA (uracil-C(5))-methyltransferase of Haemophilus influenzae (strain 86-028NP).